Reading from the N-terminus, the 285-residue chain is Phosphate import ATP-binding protein PstB (285 aa).

Residues 22–262 enclose the ABC transporter domain; that stretch reads MRAVDLTLGF…PQHEETVRYF (241 aa). 54-61 contacts ATP; the sequence is GPTGSGKT. Residues 266-285 form a disordered region; that stretch reads RPAQGSDRGSSQTAGVAESQ. Polar residues predominate over residues 272–285; sequence DRGSSQTAGVAESQ.

It belongs to the ABC transporter superfamily. Phosphate importer (TC 3.A.1.7) family. In terms of assembly, the complex is composed of two ATP-binding proteins (PstB), two transmembrane proteins (PstC and PstA) and a solute-binding protein (PstS).

It localises to the cell membrane. The catalysed reaction is phosphate(out) + ATP + H2O = ADP + 2 phosphate(in) + H(+). Functionally, part of the ABC transporter complex PstSACB involved in phosphate import. Responsible for energy coupling to the transport system. The polypeptide is Phosphate import ATP-binding protein PstB (Mycobacterium intracellulare).